A 228-amino-acid polypeptide reads, in one-letter code: Sec-independent protein translocase protein TatB (228 aa).

A helical transmembrane segment spans residues 1–21; the sequence is MFDFGLGELVFVGIIALIVLG. 2 disordered regions span residues 138-162 and 195-228; these read RSYA…AETD and PVPH…VRKS. A compositionally biased stretch (basic residues) spans 206–228; that stretch reads AISRKRDLRPKSRAKPKLRVRKS.

Belongs to the TatB family. The Tat system comprises two distinct complexes: a TatABC complex, containing multiple copies of TatA, TatB and TatC subunits, and a separate TatA complex, containing only TatA subunits. Substrates initially bind to the TatABC complex, which probably triggers association of the separate TatA complex to form the active translocon.

It localises to the cell inner membrane. Functionally, part of the twin-arginine translocation (Tat) system that transports large folded proteins containing a characteristic twin-arginine motif in their signal peptide across membranes. Together with TatC, TatB is part of a receptor directly interacting with Tat signal peptides. TatB may form an oligomeric binding site that transiently accommodates folded Tat precursor proteins before their translocation. This chain is Sec-independent protein translocase protein TatB, found in Neisseria meningitidis serogroup A / serotype 4A (strain DSM 15465 / Z2491).